Consider the following 697-residue polypeptide: Potassium-transporting ATPase ATP-binding subunit (697 aa).

4 consecutive transmembrane segments (helical) span residues 55-75 (PIMFVVEIGFIITFILSFLPS), 79-99 (SIPGWFNITVSLILLFTVLFA), 245-265 (LTLIFLIVVVTLPIFTNYLGF), and 271-291 (VLVALLVCLIPTTIGGLLSAI). Residue Asp-324 is the 4-aspartylphosphate intermediate of the active site. ATP contacts are provided by residues Asp-361, Glu-365, 393 to 400 (FKAETRMS), and Lys-412. Residues Asp-535 and Asp-539 each contribute to the Mg(2+) site. The next 3 helical transmembrane spans lie at 605 to 625 (FAIIPAMFTLAIPQMEALNIM), 633 to 653 (AILSALLFNAVIIPLLIPLAM), and 677 to 697 (GGVIVPFIGIKVIDIIVGLFI).

Belongs to the cation transport ATPase (P-type) (TC 3.A.3) family. Type IA subfamily. The system is composed of three essential subunits: KdpA, KdpB and KdpC.

Its subcellular location is the cell membrane. The enzyme catalyses K(+)(out) + ATP + H2O = K(+)(in) + ADP + phosphate + H(+). Its function is as follows. Part of the high-affinity ATP-driven potassium transport (or Kdp) system, which catalyzes the hydrolysis of ATP coupled with the electrogenic transport of potassium into the cytoplasm. This subunit is responsible for energy coupling to the transport system and for the release of the potassium ions to the cytoplasm. This Bacillus cereus (strain ZK / E33L) protein is Potassium-transporting ATPase ATP-binding subunit.